The sequence spans 285 residues: (3S)-malyl-CoA thioesterase (285 aa).

Residues R70 and E122 each coordinate substrate. 2 residues coordinate Mg(2+): E122 and D148.

Belongs to the HpcH/HpaI aldolase family. Homodimer or homotrimer. Mg(2+) serves as cofactor.

It carries out the reaction (S)-malyl-CoA + H2O = (S)-malate + CoA + H(+). With respect to regulation, reversibly inhibited by EDTA. Stimulated by the divalent cations Mg(2+) and Mn(2+). Functionally, catalyzes the hydrolysis of (3S)-malyl-CoA to (3S)-malate and free CoA. Inactive towards beta-methylmalyl-CoA and other CoA esters. The chain is (3S)-malyl-CoA thioesterase from Cereibacter sphaeroides (strain ATCC 17023 / DSM 158 / JCM 6121 / CCUG 31486 / LMG 2827 / NBRC 12203 / NCIMB 8253 / ATH 2.4.1.) (Rhodobacter sphaeroides).